The following is a 265-amino-acid chain: Deoxyribose-phosphate aldolase 2 (265 aa).

Asp-108 serves as the catalytic Proton donor/acceptor. Lys-173 acts as the Schiff-base intermediate with acetaldehyde in catalysis. The Proton donor/acceptor role is filled by Lys-207.

This sequence belongs to the DeoC/FbaB aldolase family. DeoC type 2 subfamily.

The protein localises to the cytoplasm. It catalyses the reaction 2-deoxy-D-ribose 5-phosphate = D-glyceraldehyde 3-phosphate + acetaldehyde. The protein operates within carbohydrate degradation; 2-deoxy-D-ribose 1-phosphate degradation; D-glyceraldehyde 3-phosphate and acetaldehyde from 2-deoxy-alpha-D-ribose 1-phosphate: step 2/2. Functionally, catalyzes a reversible aldol reaction between acetaldehyde and D-glyceraldehyde 3-phosphate to generate 2-deoxy-D-ribose 5-phosphate. The polypeptide is Deoxyribose-phosphate aldolase 2 (deoC2) (Yersinia pestis).